The chain runs to 162 residues: Heat shock protein beta-6 (162 aa).

The segment at 1-72 (MEIRVPVQPS…PTAQVPTDPG (72 aa)) is involved in stabilization of the HSPB1:HSBP6 heterodimer. Position 16 is a phosphoserine (S16). Q31 is covalently cross-linked (Isoglutamyl lysine isopeptide (Gln-Lys) (interchain with K-162)). Residues 56-162 (RAPSVALPTA…ASLPSPPAAK (107 aa)) form the sHSP domain. The residue at position 66 (Q66) is a Deamidated glutamine. Position 157 is a phosphoserine (S157). Residue K162 forms an Isoglutamyl lysine isopeptide (Lys-Gln) (interchain with Q-31) linkage.

The protein belongs to the small heat shock protein (HSP20) family. As to quaternary structure, homodimer. Small heat shock proteins form high molecular mass oligomers containing variable number of monomers; these oligomers display a very flexible quaternary structure easily exchanging their subunits. Heterooligomer with HSPB1; formed through oligomerization of HSPB1:HSBP6 dimers; subunit exchange leads to formation of at least two different heterooligomeric complexes, differing in variable quantities of HSPB1 and HSPB6 homodimers in addition to HSPB1:HSPB6 heterodimers. Heterooligomer with CRYAB; large heterooligomers consist of CRYAB homodimers and HSPB5:HSPB6 heterodimers but lacking HSPB6 homodimers. Interacts with BAG3. Interacts (phosphorylated) with YWHAZ. Interacts with PDE4A and PDE4D; required for maintenance of the non-phosphorylated state of HSPB6 under basal conditions. Interacts with KDR. Interacts with PRKD1. Post-translationally, the N-terminus is blocked. Phosphorylated at Ser-16 by PKA and probably PKD1K; required to protect cardiomyocytes from apoptosis. In terms of tissue distribution, widely expressed. High expression in muscle tissues.

The protein localises to the cytoplasm. Its subcellular location is the nucleus. It localises to the secreted. In terms of biological role, small heat shock protein which functions as a molecular chaperone probably maintaining denatured proteins in a folding-competent state. Seems to have versatile functions in various biological processes. Plays a role in regulating muscle function such as smooth muscle vasorelaxation and cardiac myocyte contractility. May regulate myocardial angiogenesis implicating KDR. Overexpression mediates cardioprotection and angiogenesis after induced damage. Stabilizes monomeric YWHAZ thereby supporting YWHAZ chaperone-like activity. The polypeptide is Heat shock protein beta-6 (Hspb6) (Rattus norvegicus (Rat)).